A 446-amino-acid chain; its full sequence is Chromosomal replication initiator protein DnaA (446 aa).

The segment at Met1–Pro92 is domain I, interacts with DnaA modulators. A domain II region spans residues Pro93–Ser109. Residues Met110 to Ser326 are domain III, AAA+ region. Residues Gly154, Gly156, Lys157, and Thr158 each coordinate ATP. Residues Ser327–Lys446 form a domain IV, binds dsDNA region.

It belongs to the DnaA family. In terms of assembly, oligomerizes as a right-handed, spiral filament on DNA at oriC.

The protein resides in the cytoplasm. Its function is as follows. Plays an essential role in the initiation and regulation of chromosomal replication. ATP-DnaA binds to the origin of replication (oriC) to initiate formation of the DNA replication initiation complex once per cell cycle. Binds the DnaA box (a 9 base pair repeat at the origin) and separates the double-stranded (ds)DNA. Forms a right-handed helical filament on oriC DNA; dsDNA binds to the exterior of the filament while single-stranded (ss)DNA is stabiized in the filament's interior. The ATP-DnaA-oriC complex binds and stabilizes one strand of the AT-rich DNA unwinding element (DUE), permitting loading of DNA polymerase. After initiation quickly degrades to an ADP-DnaA complex that is not apt for DNA replication. Binds acidic phospholipids. In Bacillus cereus (strain 03BB102), this protein is Chromosomal replication initiator protein DnaA.